The chain runs to 347 residues: Phosphate acyltransferase (347 aa).

Belongs to the PlsX family. In terms of assembly, homodimer. Probably interacts with PlsY.

It is found in the cytoplasm. It carries out the reaction a fatty acyl-[ACP] + phosphate = an acyl phosphate + holo-[ACP]. Its pathway is lipid metabolism; phospholipid metabolism. Catalyzes the reversible formation of acyl-phosphate (acyl-PO(4)) from acyl-[acyl-carrier-protein] (acyl-ACP). This enzyme utilizes acyl-ACP as fatty acyl donor, but not acyl-CoA. The polypeptide is Phosphate acyltransferase (Sinorhizobium fredii (strain NBRC 101917 / NGR234)).